Here is a 423-residue protein sequence, read N- to C-terminus: Adenylosuccinate synthetase (423 aa).

GTP contacts are provided by residues 11 to 17 (GDEGKGK) and 39 to 41 (GHT). Asp12 acts as the Proton acceptor in catalysis. Mg(2+)-binding residues include Asp12 and Gly39. IMP contacts are provided by residues 12 to 15 (DEGK), 37 to 40 (NAGH), Thr127, Arg141, Gln223, Thr238, and Arg302. His40 (proton donor) is an active-site residue. 298-304 (TTTGRSR) contributes to the substrate binding site. GTP-binding positions include Arg304, 330 to 332 (KLD), and 412 to 414 (SVG).

This sequence belongs to the adenylosuccinate synthetase family. As to quaternary structure, homodimer. The cofactor is Mg(2+).

It localises to the cytoplasm. The enzyme catalyses IMP + L-aspartate + GTP = N(6)-(1,2-dicarboxyethyl)-AMP + GDP + phosphate + 2 H(+). It functions in the pathway purine metabolism; AMP biosynthesis via de novo pathway; AMP from IMP: step 1/2. Its function is as follows. Plays an important role in the de novo pathway of purine nucleotide biosynthesis. Catalyzes the first committed step in the biosynthesis of AMP from IMP. The polypeptide is Adenylosuccinate synthetase (Methanococcoides burtonii (strain DSM 6242 / NBRC 107633 / OCM 468 / ACE-M)).